We begin with the raw amino-acid sequence, 256 residues long: 1-(5-phosphoribosyl)-5-[(5-phosphoribosylamino)methylideneamino] imidazole-4-carboxamide isomerase (256 aa).

D8 (proton acceptor) is an active-site residue. The active-site Proton donor is the D130.

Belongs to the HisA/HisF family.

It is found in the cytoplasm. The enzyme catalyses 1-(5-phospho-beta-D-ribosyl)-5-[(5-phospho-beta-D-ribosylamino)methylideneamino]imidazole-4-carboxamide = 5-[(5-phospho-1-deoxy-D-ribulos-1-ylimino)methylamino]-1-(5-phospho-beta-D-ribosyl)imidazole-4-carboxamide. Its pathway is amino-acid biosynthesis; L-histidine biosynthesis; L-histidine from 5-phospho-alpha-D-ribose 1-diphosphate: step 4/9. This chain is 1-(5-phosphoribosyl)-5-[(5-phosphoribosylamino)methylideneamino] imidazole-4-carboxamide isomerase, found in Chlorobium phaeovibrioides (strain DSM 265 / 1930) (Prosthecochloris vibrioformis (strain DSM 265)).